The primary structure comprises 203 residues: Large ribosomal subunit protein bL25 (203 aa).

It belongs to the bacterial ribosomal protein bL25 family. CTC subfamily. Part of the 50S ribosomal subunit; part of the 5S rRNA/L5/L18/L25 subcomplex. Contacts the 5S rRNA. Binds to the 5S rRNA independently of L5 and L18.

In terms of biological role, this is one of the proteins that binds to the 5S RNA in the ribosome where it forms part of the central protuberance. The chain is Large ribosomal subunit protein bL25 from Xanthobacter autotrophicus (strain ATCC BAA-1158 / Py2).